A 426-amino-acid chain; its full sequence is Histidine--tRNA ligase 1 (426 aa).

The protein belongs to the class-II aminoacyl-tRNA synthetase family. Homodimer.

It localises to the cytoplasm. It catalyses the reaction tRNA(His) + L-histidine + ATP = L-histidyl-tRNA(His) + AMP + diphosphate + H(+). In Bacillus cereus (strain ATCC 14579 / DSM 31 / CCUG 7414 / JCM 2152 / NBRC 15305 / NCIMB 9373 / NCTC 2599 / NRRL B-3711), this protein is Histidine--tRNA ligase 1.